A 575-amino-acid polypeptide reads, in one-letter code: Putative export ATP-binding/permease protein RBE_0492 (575 aa).

One can recognise an ABC transmembrane type-1 domain in the interval leucine 20–leucine 303. Transmembrane regions (helical) follow at residues isoleucine 21–phenylalanine 41, isoleucine 61–phenylalanine 81, phenylalanine 135–phenylalanine 155, phenylalanine 158–phenylalanine 178, alanine 242–isoleucine 262, and isoleucine 277–leucine 297. The ABC transporter domain maps to leucine 336–glutamate 571. An ATP-binding site is contributed by glycine 371 to serine 378.

Belongs to the ABC transporter superfamily. As to quaternary structure, homodimer.

The protein resides in the cell inner membrane. Part of an ABC transporter complex. Transmembrane domains (TMD) form a pore in the inner membrane and the ATP-binding domain (NBD) is responsible for energy generation. The protein is Putative export ATP-binding/permease protein RBE_0492 of Rickettsia bellii (strain RML369-C).